A 503-amino-acid polypeptide reads, in one-letter code: Aromatase (503 aa).

Residues 21 to 41 (VTVSAMPLLLIMGLLLLIWNC) traverse the membrane as a helical segment. 2 residues coordinate substrate: Asp309 and Met374. Cys437 is a binding site for heme.

This sequence belongs to the cytochrome P450 family. Heme serves as cofactor.

It is found in the endoplasmic reticulum membrane. The protein resides in the microsome membrane. It catalyses the reaction testosterone + 3 reduced [NADPH--hemoprotein reductase] + 3 O2 = 17beta-estradiol + formate + 3 oxidized [NADPH--hemoprotein reductase] + 4 H2O + 4 H(+). The catalysed reaction is androst-4-ene-3,17-dione + 3 reduced [NADPH--hemoprotein reductase] + 3 O2 = estrone + formate + 3 oxidized [NADPH--hemoprotein reductase] + 4 H2O + 4 H(+). It carries out the reaction androst-4-ene-3,17-dione + reduced [NADPH--hemoprotein reductase] + O2 = 19-hydroxyandrost-4-ene-3,17-dione + oxidized [NADPH--hemoprotein reductase] + H2O + H(+). The enzyme catalyses 19-hydroxyandrost-4-ene-3,17-dione + reduced [NADPH--hemoprotein reductase] + O2 = 19-oxo-androst-4-ene-3,17-dione + oxidized [NADPH--hemoprotein reductase] + 2 H2O + H(+). It catalyses the reaction 19-oxo-androst-4-ene-3,17-dione + reduced [NADPH--hemoprotein reductase] + O2 = estrone + formate + oxidized [NADPH--hemoprotein reductase] + H2O + 2 H(+). The catalysed reaction is estrone + reduced [NADPH--hemoprotein reductase] + O2 = 2-hydroxyestrone + oxidized [NADPH--hemoprotein reductase] + H2O + H(+). It carries out the reaction 17beta-hydroxy-5alpha-androstan-3-one + reduced [NADPH--hemoprotein reductase] + O2 = 17beta,19-dihydroxy-3-oxo-5alpha-androstanone + oxidized [NADPH--hemoprotein reductase] + H2O + H(+). The enzyme catalyses 17beta,19-dihydroxy-3-oxo-5alpha-androstanone + reduced [NADPH--hemoprotein reductase] + O2 = 17beta-hydroxy-3,19-dioxo-5alpha-androstanone + oxidized [NADPH--hemoprotein reductase] + 2 H2O + H(+). It catalyses the reaction 17beta-hydroxy-3,19-dioxo-5alpha-androstanone + reduced [NADPH--hemoprotein reductase] + O2 = 17beta-hydroxy-3-oxo-19-nor-5alpha-androst-1-ene + formate + oxidized [NADPH--hemoprotein reductase] + H2O + 2 H(+). It participates in steroid hormone biosynthesis. In terms of biological role, a cytochrome P450 monooxygenase that catalyzes the conversion of C19 androgens, androst-4-ene-3,17-dione (androstenedione) and testosterone to the C18 estrogens, estrone and estradiol, respectively. Catalyzes three successive oxidations of C19 androgens: two conventional oxidations at C19 yielding 19-hydroxy and 19-oxo/19-aldehyde derivatives, followed by a third oxidative aromatization step that involves C1-beta hydrogen abstraction combined with cleavage of the C10-C19 bond to yield a phenolic A ring and formic acid. Alternatively, the third oxidative reaction yields a 19-norsteroid and formic acid. Converts dihydrotestosterone to delta1,10-dehydro 19-nordihydrotestosterone and may play a role in homeostasis of this potent androgen. Also displays 2-hydroxylase activity toward estrone. Mechanistically, uses molecular oxygen inserting one oxygen atom into a substrate, and reducing the second into a water molecule, with two electrons provided by NADPH via cytochrome P450 reductase (CPR; NADPH-ferrihemoprotein reductase). The protein is Aromatase (Cyp19a1) of Mus musculus (Mouse).